The following is a 96-amino-acid chain: Protein Vpr (96 aa).

Residues 1 to 42 (MEQAPADQGPQREPHNEWTLELLEELKQEAVRHFPRIWLHSL) are homooligomerization. Phosphoserine; by host occurs at positions 79, 94, and 96.

Belongs to the HIV-1 VPR protein family. Homooligomer, may form homodimer. Interacts with p6-gag region of the Pr55 Gag precursor protein through a (Leu-X-X)4 motif near the C-terminus of the P6gag protein. Interacts with host UNG. May interact with host RAD23A/HHR23A. Interacts with host VPRBP/DCAF1, leading to hijack the CUL4A-RBX1-DDB1-DCAF1/VPRBP complex, mediating ubiquitination of host proteins such as TERT and ZGPAT and arrest of the cell cycle in G2 phase. Post-translationally, phosphorylated on several residues by host. These phosphorylations regulate VPR activity for the nuclear import of the HIV-1 pre-integration complex.

It localises to the virion. The protein resides in the host nucleus. It is found in the host extracellular space. In terms of biological role, during virus replication, may deplete host UNG protein, and incude G2-M cell cycle arrest. Acts by targeting specific host proteins for degradation by the 26S proteasome, through association with the cellular CUL4A-DDB1 E3 ligase complex by direct interaction with host VPRPB/DCAF-1. Cell cycle arrest reportedly occurs within hours of infection and is not blocked by antiviral agents, suggesting that it is initiated by the VPR carried into the virion. Additionally, VPR induces apoptosis in a cell cycle dependent manner suggesting that these two effects are mechanistically linked. Detected in the serum and cerebrospinal fluid of AIDS patient, VPR may also induce cell death to bystander cells. Functionally, during virus entry, plays a role in the transport of the viral pre-integration (PIC) complex to the host nucleus. This function is crucial for viral infection of non-dividing macrophages. May act directly at the nuclear pore complex, by binding nucleoporins phenylalanine-glycine (FG)-repeat regions. The polypeptide is Protein Vpr (Homo sapiens (Human)).